Consider the following 197-residue polypeptide: Probable GTP-binding protein EngB (197 aa).

One can recognise an EngB-type G domain in the interval 26–197 (ELPEIALAGR…EAWDAILEKL (172 aa)). GTP-binding positions include 34 to 41 (GRSNVGKS), 61 to 65 (GKTQL), 79 to 82 (DVPG), 146 to 149 (TKAD), and 178 to 180 (FSS). The Mg(2+) site is built by serine 41 and threonine 63.

It belongs to the TRAFAC class TrmE-Era-EngA-EngB-Septin-like GTPase superfamily. EngB GTPase family. The cofactor is Mg(2+).

Its function is as follows. Necessary for normal cell division and for the maintenance of normal septation. In Streptococcus pneumoniae (strain CGSP14), this protein is Probable GTP-binding protein EngB.